Here is a 150-residue protein sequence, read N- to C-terminus: Large ribosomal subunit protein bL9 (150 aa).

It belongs to the bacterial ribosomal protein bL9 family.

In terms of biological role, binds to the 23S rRNA. In Vibrio campbellii (strain ATCC BAA-1116), this protein is Large ribosomal subunit protein bL9.